The primary structure comprises 343 residues: tRNA N6-adenosine threonylcarbamoyltransferase (343 aa).

Fe cation-binding residues include His116 and His120. Residues 138 to 142, Asp172, Gly185, Asp189, and Asn277 each bind substrate; that span reads LVSGG. Asp305 contacts Fe cation.

It belongs to the KAE1 / TsaD family. Requires Fe(2+) as cofactor.

Its subcellular location is the cytoplasm. The enzyme catalyses L-threonylcarbamoyladenylate + adenosine(37) in tRNA = N(6)-L-threonylcarbamoyladenosine(37) in tRNA + AMP + H(+). Required for the formation of a threonylcarbamoyl group on adenosine at position 37 (t(6)A37) in tRNAs that read codons beginning with adenine. Is involved in the transfer of the threonylcarbamoyl moiety of threonylcarbamoyl-AMP (TC-AMP) to the N6 group of A37, together with TsaE and TsaB. TsaD likely plays a direct catalytic role in this reaction. The polypeptide is tRNA N6-adenosine threonylcarbamoyltransferase (Mycobacterium ulcerans (strain Agy99)).